We begin with the raw amino-acid sequence, 71 residues long: Beta-defensin 7 (71 aa).

An N-terminal signal peptide occupies residues 1–22; that stretch reads MRIHYVLFAFLLVLLSPFAAFS. Gln23 is subject to Pyrrolidone carboxylic acid. A propeptide spanning residues 23–25 is cleaved from the precursor; sequence QDI. 3 cysteine pairs are disulfide-bonded: Cys31-Cys58, Cys38-Cys52, and Cys42-Cys59.

It belongs to the beta-defensin family. LAP/TAP subfamily.

It is found in the secreted. Has bactericidal activity. This is Beta-defensin 7 (Defb7) from Mus musculus (Mouse).